The sequence spans 861 residues: Leucine--tRNA ligase (861 aa).

Residues P42–H52 carry the 'HIGH' region motif. The 'KMSKS' region signature appears at K620–S624. ATP is bound at residue K623.

This sequence belongs to the class-I aminoacyl-tRNA synthetase family.

It is found in the cytoplasm. It catalyses the reaction tRNA(Leu) + L-leucine + ATP = L-leucyl-tRNA(Leu) + AMP + diphosphate. This chain is Leucine--tRNA ligase, found in Hahella chejuensis (strain KCTC 2396).